The following is a 353-amino-acid chain: Glycerol-3-phosphate dehydrogenase [NAD(P)+] (353 aa).

NADPH-binding residues include Trp-11, Arg-40, and Lys-115. The sn-glycerol 3-phosphate site is built by Lys-115, Gly-156, and Ser-158. Residue Ala-160 coordinates NADPH. Residues Lys-211, Asp-264, Ser-274, Arg-275, and Asn-276 each coordinate sn-glycerol 3-phosphate. Residue Lys-211 is the Proton acceptor of the active site. Arg-275 contributes to the NADPH binding site. Positions 299 and 301 each coordinate NADPH.

Belongs to the NAD-dependent glycerol-3-phosphate dehydrogenase family.

The protein resides in the cytoplasm. The enzyme catalyses sn-glycerol 3-phosphate + NAD(+) = dihydroxyacetone phosphate + NADH + H(+). The catalysed reaction is sn-glycerol 3-phosphate + NADP(+) = dihydroxyacetone phosphate + NADPH + H(+). It functions in the pathway membrane lipid metabolism; glycerophospholipid metabolism. Functionally, catalyzes the reduction of the glycolytic intermediate dihydroxyacetone phosphate (DHAP) to sn-glycerol 3-phosphate (G3P), the key precursor for phospholipid synthesis. This Polaromonas sp. (strain JS666 / ATCC BAA-500) protein is Glycerol-3-phosphate dehydrogenase [NAD(P)+].